Here is a 1362-residue protein sequence, read N- to C-terminus: Bromodomain-containing protein 4 (1362 aa).

Positions 1–58 (MSAESGPGTRLRNLPVMGDGLETSQMSTTQAQAQPQPANAASTNPPPPETSNPNKPKR) are disordered. Positions 23-43 (TSQMSTTQAQAQPQPANAAST) are enriched in low complexity. One can recognise a Bromo 1 domain in the interval 58-164 (RQTNQLQYLL…KLFLQKINEL (107 aa)). K99 participates in a covalent cross-link: Glycyl lysine isopeptide (Lys-Gly) (interchain with G-Cter in SUMO2). Disordered stretches follow at residues 174–229 (VQAK…PAVT), 242–352 (VPPQ…KVSE), and 463–615 (EPVV…YEEK). Residues 197–211 (PNTTQASTPPQTQTP) show a composition bias toward low complexity. Composition is skewed to pro residues over residues 212–227 (QPNPPPVQATPHPFPA) and 243–266 (PPQPLQTPPPVPPQPQPPPAPAPQ). A compositionally biased stretch (basic and acidic residues) spans 320–336 (QRRESSRPVKPPKKDVP). The region spanning 348–457 (SKVSEQLKCC…DVFEMRFAKM (110 aa)) is the Bromo 2 domain. S470 is subject to Phosphoserine. Positions 478 to 497 (KVVAPPSSSDSSSDSSSDSD) are enriched in low complexity. Phosphoserine; by CK2 is present on residues S484, S488, S492, S494, S498, S499, and S503. Residues 484–503 (SSSDSSSDSSSDSDSSTDDS) form an NPS region region. The segment at 524-579 (QLAALSQPQQNKPKKKEKDKKEKKKEKHKRKEEVEENKKSKAKEPPPKKTKKNNSS) is BID region. Over residues 535-553 (KPKKKEKDKKEKKKEKHKR) the composition is skewed to basic residues. Basic and acidic residues predominate over residues 554–570 (KEEVEENKKSKAKEPPP). K585 participates in a covalent cross-link: Glycyl lysine isopeptide (Lys-Gly) (interchain with G-Cter in SUMO2). The NET domain maps to 600-682 (ESEEEDKCKP…SCLRKKRKPQ (83 aa)). S601 is subject to Phosphoserine. Basic and acidic residues predominate over residues 605–615 (DKCKPMSYEEK). Glycyl lysine isopeptide (Lys-Gly) (interchain with G-Cter in SUMO2) cross-links involve residues K645 and K694. Positions 674-1100 (CLRKKRKPQA…PKKQELRAAS (427 aa)) are disordered. Low complexity predominate over residues 699 to 712 (SSSESESSSESSSS). Residues 724–744 (KSKKKGHPGREQKKHHHHHHQ) are compositionally biased toward basic residues. Composition is skewed to pro residues over residues 751-785 (APVPQQPPPPPQQPPPPPPPQQQQQPPPPPPPPSM), 833-846 (PELPPHLPQPPEHS), and 881-890 (PPKPARPPAV). Low complexity predominate over residues 926-936 (MQMQLYLQQLQ). Composition is skewed to pro residues over residues 953-964 (QPPPPLPPPPHP), 973-996 (QPPPPPPPQPQPPPQQQHQPPPRP), and 1010-1034 (QPPPPQGQQPPHPPPGQQPPPPQPA). Positions 1041 to 1050 (QHHHSPRHHK) are enriched in basic residues. The tract at residues 1047-1362 (RHHKSDPYST…LLSIFEENLF (316 aa)) is C-terminal (CTD) region. K1050 participates in a covalent cross-link: Glycyl lysine isopeptide (Lys-Gly) (interchain with G-Cter in SUMO2). Residues 1071–1091 (PQMSQFQSLTHQSPPQQNVQP) are compositionally biased toward polar residues. K1111 bears the N6-acetyllysine; alternate mark. K1111 is covalently cross-linked (Glycyl lysine isopeptide (Lys-Gly) (interchain with G-Cter in SUMO1); alternate). K1111 participates in a covalent cross-link: Glycyl lysine isopeptide (Lys-Gly) (interchain with G-Cter in SUMO2); alternate. The interval 1116–1339 (HSPIIRSEPF…KREQERRRRE (224 aa)) is disordered. S1117 and S1126 each carry phosphoserine. Residues 1175–1196 (PDKDKQKQEPKTPVAPKKDLKI) show a composition bias toward basic and acidic residues. K1197 is covalently cross-linked (Glycyl lysine isopeptide (Lys-Gly) (interchain with G-Cter in SUMO2)). S1201 and S1204 each carry phosphoserine. Residues 1211–1223 (TTPSSTAKSSSDS) are compositionally biased toward low complexity. Residues 1225-1284 (EQFRRAAREKEEREKALKAQAEHAEKEKERLRQERMRSREDEDALEQARRAHEEARRRQE) show a composition bias toward basic and acidic residues. Residues 1285-1313 (QQQQQRQEQQQQQQQQAAAVAAAATPQAQ) are compositionally biased toward low complexity. Residues 1323-1339 (QQRELARKREQERRRRE) are compositionally biased toward basic and acidic residues.

Belongs to the BET family. In terms of assembly, interacts with p53/TP53; the interaction is direct. Interacts (via CTD region) with CDK9 and CCNT1, acting as an associated component of P-TEFb complex. Interacts with RELA (when acetylated at 'Lys-310'). Interacts (via NET domain) with NSD3, CHD4, BICRA and ATAD5. The interaction with BICRA bridges BRD4 to the GBAF complex. Interacts (via NET domain) with JMJD6 (via JmjC and N-terminal domains); the interaction is stronger in presence of ssRNA and recruits JMJD6 on distal enhancers. Interacts with NSD3. Interacts with NIPBL. Interacts with SMC2. Interacts with NCAPD3. As to quaternary structure, (Microbial infection) Interacts with bovine papillomavirus type 1 regulatory protein E2. This interactions may serve for the tethering of viral genomes to host mitotic chromosomes allowing successful partitioning of the viral genome during cell division. In terms of assembly, (Microbial infection) Interacts with Epstein-Barr virus (EBV) protein EBNA1; this interaction facilitates transcriptional activation by EBNA1. (Microbial infection) Interacts with human herpes virus-8 (HHV-8) protein LANA. In terms of processing, phosphorylation by CK2 disrupt the intramolecular binding between the bromo domain 2 and the NPS region and promotes binding between the NPS and the BID regions, leading to activate the protein and promote binding to acetylated histones. In absence of phosphorylation, BRD4 does not localize to p53/TP53 target gene promoters, phosphorylation promoting recruitment to p53/TP53 target promoters. Ubiquitously expressed.

The protein localises to the nucleus. It localises to the chromosome. Inhibited by JQ1, a thieno-triazolo-1,4-diazepine derivative, which specifically inhibits members of the BET family (BRD2, BRD3 and BRD4). The first bromo domain is inhibited by GSK778 (iBET-BD1), which specifically inhibits the first bromo domain of members of the BET family (BRD2, BRD3 and BRD4). The second bromo domain is inhibited by ABBV-744, which specifically inhibits the second bromo domain of members of the BET family (BRD2, BRD3 and BRD4). The second bromo domain is inhibited by GSK046 (iBET-BD2), which specifically inhibits the second bromo domain of members of the BET family (BRD2, BRD3 and BRD4). In terms of biological role, chromatin reader protein that recognizes and binds acetylated histones and plays a key role in transmission of epigenetic memory across cell divisions and transcription regulation. Remains associated with acetylated chromatin throughout the entire cell cycle and provides epigenetic memory for postmitotic G1 gene transcription by preserving acetylated chromatin status and maintaining high-order chromatin structure. During interphase, plays a key role in regulating the transcription of signal-inducible genes by associating with the P-TEFb complex and recruiting it to promoters. Also recruits P-TEFb complex to distal enhancers, so called anti-pause enhancers in collaboration with JMJD6. BRD4 and JMJD6 are required to form the transcriptionally active P-TEFb complex by displacing negative regulators such as HEXIM1 and 7SKsnRNA complex from P-TEFb, thereby transforming it into an active form that can then phosphorylate the C-terminal domain (CTD) of RNA polymerase II. Regulates differentiation of naive CD4(+) T-cells into T-helper Th17 by promoting recruitment of P-TEFb to promoters. Promotes phosphorylation of 'Ser-2' of the C-terminal domain (CTD) of RNA polymerase II. According to a report, directly acts as an atypical protein kinase and mediates phosphorylation of 'Ser-2' of the C-terminal domain (CTD) of RNA polymerase II; these data however need additional evidences in vivo. In addition to acetylated histones, also recognizes and binds acetylated RELA, leading to further recruitment of the P-TEFb complex and subsequent activation of NF-kappa-B. Also acts as a regulator of p53/TP53-mediated transcription: following phosphorylation by CK2, recruited to p53/TP53 specific target promoters. Functionally, acts as a chromatin insulator in the DNA damage response pathway. Inhibits DNA damage response signaling by recruiting the condensin-2 complex to acetylated histones, leading to chromatin structure remodeling, insulating the region from DNA damage response by limiting spreading of histone H2AX/H2A.x phosphorylation. The polypeptide is Bromodomain-containing protein 4 (BRD4) (Homo sapiens (Human)).